A 502-amino-acid chain; its full sequence is Glutamate--tRNA ligase (502 aa).

A 'HIGH' region motif is present at residues 21-31 (PSPTGVPHVGM). A 'KMSKS' region motif is present at residues 265 to 269 (KLSKR). Lys268 is a binding site for ATP.

Belongs to the class-I aminoacyl-tRNA synthetase family. Glutamate--tRNA ligase type 1 subfamily. In terms of assembly, monomer.

The protein localises to the cytoplasm. The catalysed reaction is tRNA(Glu) + L-glutamate + ATP = L-glutamyl-tRNA(Glu) + AMP + diphosphate. Its function is as follows. Catalyzes the attachment of glutamate to tRNA(Glu) in a two-step reaction: glutamate is first activated by ATP to form Glu-AMP and then transferred to the acceptor end of tRNA(Glu). The protein is Glutamate--tRNA ligase of Mycobacterium leprae (strain TN).